The following is a 167-amino-acid chain: Large ribosomal subunit protein uL10 (167 aa).

The protein belongs to the universal ribosomal protein uL10 family. In terms of assembly, part of the ribosomal stalk of the 50S ribosomal subunit. The N-terminus interacts with L11 and the large rRNA to form the base of the stalk. The C-terminus forms an elongated spine to which L12 dimers bind in a sequential fashion forming a multimeric L10(L12)X complex.

Functionally, forms part of the ribosomal stalk, playing a central role in the interaction of the ribosome with GTP-bound translation factors. This Latilactobacillus sakei subsp. sakei (strain 23K) (Lactobacillus sakei subsp. sakei) protein is Large ribosomal subunit protein uL10.